The primary structure comprises 475 residues: uncharacterized protein (475 aa).

The protein to E.coli YihN.

This is an uncharacterized protein from Mycoplasma pneumoniae (strain ATCC 29342 / M129 / Subtype 1) (Mycoplasmoides pneumoniae).